We begin with the raw amino-acid sequence, 222 residues long: Small ribosomal subunit protein uS5 (222 aa).

The interval 1–41 (MAEQAGAGSAQDNRGGGRDDRGGRGRRDDRGGRGGRDDREK) is disordered. Residues 15 to 41 (GGGRDDRGGRGRRDDRGGRGGRDDREK) show a composition bias toward basic and acidic residues. Positions 44–107 (YLERVVTINR…EEARKNFFRV (64 aa)) constitute an S5 DRBM domain.

Belongs to the universal ribosomal protein uS5 family. As to quaternary structure, part of the 30S ribosomal subunit. Contacts proteins S4 and S8.

In terms of biological role, with S4 and S12 plays an important role in translational accuracy. Functionally, located at the back of the 30S subunit body where it stabilizes the conformation of the head with respect to the body. This is Small ribosomal subunit protein uS5 from Mycolicibacterium gilvum (strain PYR-GCK) (Mycobacterium gilvum (strain PYR-GCK)).